A 385-amino-acid chain; its full sequence is Acetate kinase (385 aa).

Mg(2+) is bound at residue Asn-8. Lys-15 is a binding site for ATP. Residue Arg-85 participates in substrate binding. Catalysis depends on Asp-142, which acts as the Proton donor/acceptor. ATP is bound by residues 200 to 204 (HLGNG), 275 to 277 (DMR), and 323 to 327 (GIGEN). Glu-373 is a binding site for Mg(2+).

It belongs to the acetokinase family. As to quaternary structure, homodimer. The cofactor is Mg(2+). Mn(2+) serves as cofactor.

It localises to the cytoplasm. The enzyme catalyses acetate + ATP = acetyl phosphate + ADP. It participates in metabolic intermediate biosynthesis; acetyl-CoA biosynthesis; acetyl-CoA from acetate: step 1/2. Functionally, catalyzes the formation of acetyl phosphate from acetate and ATP. Can also catalyze the reverse reaction. This chain is Acetate kinase, found in Francisella tularensis subsp. holarctica (strain OSU18).